Reading from the N-terminus, the 578-residue chain is 2-succinyl-5-enolpyruvyl-6-hydroxy-3-cyclohexene-1-carboxylate synthase (578 aa).

The protein belongs to the TPP enzyme family. MenD subfamily. Homodimer. Mg(2+) is required as a cofactor. The cofactor is Mn(2+). Thiamine diphosphate serves as cofactor.

The catalysed reaction is isochorismate + 2-oxoglutarate + H(+) = 5-enolpyruvoyl-6-hydroxy-2-succinyl-cyclohex-3-ene-1-carboxylate + CO2. It participates in quinol/quinone metabolism; 1,4-dihydroxy-2-naphthoate biosynthesis; 1,4-dihydroxy-2-naphthoate from chorismate: step 2/7. Its pathway is quinol/quinone metabolism; menaquinone biosynthesis. Catalyzes the thiamine diphosphate-dependent decarboxylation of 2-oxoglutarate and the subsequent addition of the resulting succinic semialdehyde-thiamine pyrophosphate anion to isochorismate to yield 2-succinyl-5-enolpyruvyl-6-hydroxy-3-cyclohexene-1-carboxylate (SEPHCHC). This chain is 2-succinyl-5-enolpyruvyl-6-hydroxy-3-cyclohexene-1-carboxylate synthase, found in Prosthecochloris aestuarii (strain DSM 271 / SK 413).